The chain runs to 123 residues: Secreted RxLR effector protein RXLR-C21 (123 aa).

The N-terminal stretch at 1 to 23 (MRLHLLVLSVIVVSLLVSDNAHA) is a signal peptide. Positions 32–65 (RALRETPINGLVTNQLAVSRNLTPAKFITNSEER) match the RxLR-dEER motif. Residues 101–121 (VTTICSIVLFVMVFGCLYKIF) form a helical membrane-spanning segment.

It belongs to the RxLR effector family.

The protein resides in the secreted. It is found in the host endoplasmic reticulum membrane. In terms of biological role, secreted effector that does not suppress pattern-triggered immunity (PTI) in plant host. The chain is Secreted RxLR effector protein RXLR-C21 from Plasmopara halstedii (Downy mildew of sunflower).